The primary structure comprises 500 residues: Cytochrome P450 71B22 (500 aa).

A helical membrane pass occupies residues 1-21; it reads MSISLYFLLLLPLFLIFFKKL. Heme is bound at residue Cys-441.

The protein belongs to the cytochrome P450 family. Requires heme as cofactor.

It is found in the membrane. This is Cytochrome P450 71B22 (CYP71B22) from Arabidopsis thaliana (Mouse-ear cress).